A 163-amino-acid polypeptide reads, in one-letter code: Disulfide bond formation protein B 1 (163 aa).

The Cytoplasmic portion of the chain corresponds to 1–9 (MPLASPRQL). A helical transmembrane segment spans residues 10 to 26 (FLLAFLACVAIMGGALY). Residues 27 to 44 (LEHVVGLEACPLCVVQRI) are Periplasmic-facing. Cysteine 36 and cysteine 39 are disulfide-bonded. A helical membrane pass occupies residues 45–61 (FFILIGLTCLAGAIQGP). Residues 62–67 (GLRGRR) are Cytoplasmic-facing. A helical transmembrane segment spans residues 68–85 (IYSVLVFLLALGGGATAA). The Periplasmic portion of the chain corresponds to 86–142 (RQVWLQTVPLDQLPACLPSLDYMMQALPFQEVIRLVLHGTADCAQVSWTLFTLSIPE). An intrachain disulfide couples cysteine 101 to cysteine 128. The chain crosses the membrane as a helical span at residues 143–161 (WSLLAFVAYLGFSIVQFLR). The Cytoplasmic portion of the chain corresponds to 162 to 163 (RA).

This sequence belongs to the DsbB family.

The protein resides in the cell inner membrane. Functionally, required for disulfide bond formation in some periplasmic proteins. Acts by oxidizing the DsbA protein. This Pseudomonas aeruginosa (strain ATCC 15692 / DSM 22644 / CIP 104116 / JCM 14847 / LMG 12228 / 1C / PRS 101 / PAO1) protein is Disulfide bond formation protein B 1 (dsbB1).